Consider the following 249-residue polypeptide: Octanoyltransferase (249 aa).

A disordered region spans residues 1-23 (MVNSPQNPRQDQRQDLDLTSFSA). In terms of domain architecture, BPL/LPL catalytic spans 57–241 (GEAPELVWLL…AFEELFGPTR (185 aa)). Residues 95–102 (RGGQLTYH), 170–172 (AIG), and 183–185 (GIA) contribute to the substrate site. Catalysis depends on Cys-201, which acts as the Acyl-thioester intermediate.

It belongs to the LipB family.

Its subcellular location is the cytoplasm. The catalysed reaction is octanoyl-[ACP] + L-lysyl-[protein] = N(6)-octanoyl-L-lysyl-[protein] + holo-[ACP] + H(+). Its pathway is protein modification; protein lipoylation via endogenous pathway; protein N(6)-(lipoyl)lysine from octanoyl-[acyl-carrier-protein]: step 1/2. In terms of biological role, catalyzes the transfer of endogenously produced octanoic acid from octanoyl-acyl-carrier-protein onto the lipoyl domains of lipoate-dependent enzymes. Lipoyl-ACP can also act as a substrate although octanoyl-ACP is likely to be the physiological substrate. This is Octanoyltransferase from Bradyrhizobium diazoefficiens (strain JCM 10833 / BCRC 13528 / IAM 13628 / NBRC 14792 / USDA 110).